A 254-amino-acid chain; its full sequence is Low affinity immunoglobulin gamma Fc region receptor III-A (254 aa).

The first 20 residues, 1–20, serve as a signal peptide directing secretion; sequence MWQLLLPTALLLLVSAGMRA. Ig-like C2-type domains follow at residues 24–105 and 107–189; these read PKAV…LEVH and GWLL…VNIT. Cystine bridges form between Cys-47-Cys-89 and Cys-128-Cys-172. The N-linked (GlcNAc...) asparagine glycan is linked to Asn-187. Residues 207–229 traverse the membrane as a helical segment; the sequence is YQVSFCLVMVLLFAVDTGLYFSV. The interval 234–254 is disordered; it reads PSSTSDWKDHKFKWSKDPQDK. Residues 239 to 254 are compositionally biased toward basic and acidic residues; it reads DWKDHKFKWSKDPQDK.

As to quaternary structure, forms a heterooligomeric complex with ITAM-containing signaling subunits, either a homodimer of CD247, a homodimer of FCER1G or a heterodimer of CD247 and FCER1G, to form a functional receptor complex. Interacts (via transmembrane domain) with signaling subunits; this interaction is a prerequisite for receptor complex expression on the cell surface and intracellular signal transduction. Binds the Fc region of antigen-complexed IgG with a preference for IgG1 and IgG3 isotypes. Interacts with CD2; this interaction is involved in NK cell activation and cytotoxicity. Interacts with S100A4; this interaction inhibits PKC-dependent phosphorylation of FCGR3A. In terms of processing, glycosylated. Glycosylation plays an inhibitory role in the interaction with IgG1 and IgG2. Post-translationally, undergoes rapid ectodomain shedding upon NK cell stimulation. The soluble form is produced by a proteolytic cleavage mediated by ADAM17. Repeated stimulation causes receptor shedding, a mechanism that allows for increased NK cell motility and detachment from opsonized target cells while avoiding activation-induced NK cell apoptosis. In terms of tissue distribution, lymphocytes and monocytes.

It is found in the cell membrane. The protein resides in the secreted. Receptor for the invariable Fc fragment of immunoglobulin gamma (IgG). Optimally activated upon binding of clustered antigen-IgG complexes displayed on cell surfaces, triggers lysis of antibody-coated cells, a process known as antibody-dependent cellular cytotoxicity (ADCC). Does not bind free monomeric IgG, thus avoiding inappropriate effector cell activation in the absence of antigenic trigger. Mediates IgG effector functions on natural killer (NK) cells. Binds antigen-IgG complexes generated upon infection and triggers NK cell-dependent cytokine production and degranulation to limit viral load and propagation. Involved in the generation of memory-like adaptive NK cells capable to produce high amounts of IFNG and to efficiently eliminate virus-infected cells via ADCC. Regulates NK cell survival and proliferation, in particular by preventing NK cell progenitor apoptosis. Fc-binding subunit that associates with CD247 and/or FCER1G adapters to form functional signaling complexes. Following the engagement of antigen-IgG complexes, triggers phosphorylation of immunoreceptor tyrosine-based activation motif (ITAM)-containing adapters with subsequent activation of phosphatidylinositol 3-kinase signaling and sustained elevation of intracellular calcium that ultimately drive NK cell activation. The ITAM-dependent signaling coupled to receptor phosphorylation by PKC mediates robust intracellular calcium flux that leads to production of pro-inflammatory cytokines, whereas in the absence of receptor phosphorylation it mainly activates phosphatidylinositol 3-kinase signaling leading to cell degranulation. Costimulates NK cells and trigger lysis of target cells independently of IgG binding. Mediates the antitumor activities of therapeutic antibodies. Upon ligation on monocytes triggers TNFA-dependent ADCC of IgG-coated tumor cells. Mediates enhanced ADCC in response to afucosylated IgGs. The sequence is that of Low affinity immunoglobulin gamma Fc region receptor III-A (FCGR3A) from Papio anubis (Olive baboon).